Reading from the N-terminus, the 169-residue chain is Ribosome maturation factor RimM (169 aa).

Positions 95 to 169 (EDGYYWTDLI…QITVDWELGY (75 aa)) constitute a PRC barrel domain.

It belongs to the RimM family. As to quaternary structure, binds ribosomal protein uS19.

The protein resides in the cytoplasm. An accessory protein needed during the final step in the assembly of 30S ribosomal subunit, possibly for assembly of the head region. Essential for efficient processing of 16S rRNA. May be needed both before and after RbfA during the maturation of 16S rRNA. It has affinity for free ribosomal 30S subunits but not for 70S ribosomes. The chain is Ribosome maturation factor RimM from Nitrosomonas europaea (strain ATCC 19718 / CIP 103999 / KCTC 2705 / NBRC 14298).